Here is a 97-residue protein sequence, read N- to C-terminus: Large ribosomal subunit protein bL28 (97 aa).

The protein belongs to the bacterial ribosomal protein bL28 family.

The sequence is that of Large ribosomal subunit protein bL28 from Brucella ovis (strain ATCC 25840 / 63/290 / NCTC 10512).